A 627-amino-acid chain; its full sequence is Phosphomethylpyrimidine synthase (627 aa).

Residues Asn233, Met262, Tyr291, His327, 347-349 (SRG), 388-391 (DGLR), and Glu427 contribute to the substrate site. Zn(2+) is bound at residue His431. Residue Tyr454 coordinates substrate. A Zn(2+)-binding site is contributed by His495. [4Fe-4S] cluster-binding residues include Cys575, Cys578, and Cys583.

Belongs to the ThiC family. As to quaternary structure, homodimer. Requires [4Fe-4S] cluster as cofactor.

It carries out the reaction 5-amino-1-(5-phospho-beta-D-ribosyl)imidazole + S-adenosyl-L-methionine = 4-amino-2-methyl-5-(phosphooxymethyl)pyrimidine + CO + 5'-deoxyadenosine + formate + L-methionine + 3 H(+). Its pathway is cofactor biosynthesis; thiamine diphosphate biosynthesis. Functionally, catalyzes the synthesis of the hydroxymethylpyrimidine phosphate (HMP-P) moiety of thiamine from aminoimidazole ribotide (AIR) in a radical S-adenosyl-L-methionine (SAM)-dependent reaction. This is Phosphomethylpyrimidine synthase from Acidithiobacillus ferrooxidans (strain ATCC 23270 / DSM 14882 / CIP 104768 / NCIMB 8455) (Ferrobacillus ferrooxidans (strain ATCC 23270)).